The sequence spans 142 residues: Hemoglobin subunit alpha-2 (142 aa).

Residues 2-142 (LLSADDKKHI…VSTVLTSKYR (141 aa)) enclose the Globin domain. Histidine 59 serves as a coordination point for O2. Residue histidine 88 participates in heme b binding.

It belongs to the globin family. Heterotetramer of two alpha chains and two beta chains. As to expression, red blood cells.

Involved in oxygen transport from the lung to the various peripheral tissues. The protein is Hemoglobin subunit alpha-2 (hba2) of Xenopus laevis (African clawed frog).